A 206-amino-acid polypeptide reads, in one-letter code: Flavin reductase (NADPH) (206 aa).

NADP(+)-binding residues include Gly-10, Thr-12, Gly-13, Asn-14, Thr-15, Arg-35, Ser-38, and Arg-39. Ser-42 bears the Phosphoserine mark. Positions 54, 55, 75, 76, and 78 each coordinate NADP(+). Residue Ser-82 is modified to Phosphoserine. Residues Met-87, Cys-109, His-132, His-153, and Ile-154 each contribute to the NADP(+) site. The active-site S-nitroso-cysteine intermediate; for S-nitroso-CoA-dependent nitrosyltransferase activity is Cys-109. Cys-188 (S-nitroso-cysteine intermediate; for S-nitroso-CoA-dependent nitrosyltransferase activity) is an active-site residue.

Monomer. As to expression, at least expressed in the liver and erythrocyte.

Its subcellular location is the cytoplasm. It catalyses the reaction reduced riboflavin + NADP(+) = riboflavin + NADPH + 2 H(+). The catalysed reaction is bilirubin IXbeta + NADP(+) = biliverdin IXbeta + NADPH + H(+). It carries out the reaction FMNH2 + NAD(+) = FMN + NADH + 2 H(+). The enzyme catalyses FMNH2 + NADP(+) = FMN + NADPH + 2 H(+). It catalyses the reaction S-nitroso-CoA + L-cysteinyl-[protein] = S-nitroso-L-cysteinyl-[protein] + CoA. The catalysed reaction is L-cysteinyl-[SCAN] + S-nitroso-CoA = S-nitroso-L-cysteinyl-[SCAN] + CoA. It carries out the reaction S-nitroso-L-cysteinyl-[SCAN] + L-cysteinyl-[protein] = L-cysteinyl-[SCAN] + S-nitroso-L-cysteinyl-[protein]. In terms of biological role, enzyme that can both act as a NAD(P)H-dependent reductase and a S-nitroso-CoA-dependent nitrosyltransferase. Promotes fetal heme degradation during development. Also expressed in adult tissues, where it acts as a regulator of hematopoiesis, intermediary metabolism (glutaminolysis, glycolysis, TCA cycle and pentose phosphate pathway) and insulin signaling. Has a broad specificity oxidoreductase activity by catalyzing the NAD(P)H-dependent reduction of a variety of flavins, such as riboflavin, FAD or FMN, biliverdins, methemoglobin and PQQ (pyrroloquinoline quinone). Contributes to fetal heme catabolism by catalyzing reduction of biliverdin IXbeta into bilirubin IXbeta in the liver. Biliverdin IXbeta, which constitutes the major heme catabolite in the fetus is not present in adult. Does not reduce bilirubin IXalpha. Can also reduce the complexed Fe(3+) iron to Fe(2+) in the presence of FMN and NADPH. Acts as a protein nitrosyltransferase by catalyzing nitrosylation of cysteine residues of target proteins, such as HMOX2, INSR and IRS1. S-nitroso-CoA-dependent nitrosyltransferase activity is mediated via a 'ping-pong' mechanism: BLVRB first associates with both S-nitroso-CoA and protein substrate, nitric oxide group is then transferred from S-nitroso-CoA to Cys-109 and Cys-188 residues of BLVRB and from S-nitroso-BLVRB to the protein substrate. Inhibits insulin signaling by mediating nitrosylation of INSR and IRS1, leading to their inhibition. In Bos taurus (Bovine), this protein is Flavin reductase (NADPH) (BLVRB).